A 312-amino-acid chain; its full sequence is Atrochrysone carboxyl ACP thioesterase AacuM (312 aa).

The Zn(2+) site is built by H103, H105, D107, and H108. The active-site Proton donor/acceptor is the D107.

This sequence belongs to the metallo-beta-lactamase superfamily. The cofactor is Zn(2+).

It catalyses the reaction atrochrysone carboxyl-[ACP] + H2O = atrochrysone carboxylate + holo-[ACP] + H(+). It functions in the pathway secondary metabolite biosynthesis. In terms of biological role, atrochrysone carboxyl ACP thioesterase; part of the gene cluster that mediates the biosynthesis of the tetrahydroxanthone dimer secalonic acid D. The pathway begins with the synthesis of atrochrysone thioester by the polyketide synthase AacuL. The atrochrysone carboxyl ACP thioesterase AacuM then breaks the thioester bond and releases the atrochrysone carboxylic acid from AacuL. Atrochrysone carboxylic acid is decarboxylated by the decarboxylase AacuI, and oxidized by the anthrone oxygenase AacuG to yield emodin. Emodin is then reduced to emodin hydroquinone by a yet unidentified oxidoreductase. A-ring reduction by the short chain dehydrogenase AacuN, dehydration by the scytalone dehydratase-like protein AacuK and probable spontaneous re-oxidation, results in overall deoxygenation to chrysophanol. Baeyer-Villiger oxidation by the Baeyer-Villiger monooxygenase (BVMO) AacuH then yields monodictyphenone. Monodictyphenone is transformed into compounds with the tetrahydroxanthone skeleton via methylesterification by the methyltransferase AacuQ, followed by the action of the flavin-dependent monooxygenase AacuC, the isomerase AacuP, and the short chain dehydrogenase/reductase AacuF or AacuD. AacuF and AacuD should accept the same compound as a substrate but perform the ketoreduction with a different stereoselectivity, thus yielding blennolides B and A, respectively. In the final step of the biosynthesis, the cytochrome P450 monooxygenase AacuE accepts blennolide B and/or blennolide A to conduct the dimerization reaction to furnish the tetrahydroxanthone dimers, secalonic acids D, B, and F. This is Atrochrysone carboxyl ACP thioesterase AacuM from Aspergillus aculeatus (strain ATCC 16872 / CBS 172.66 / WB 5094).